Consider the following 433-residue polypeptide: MGQNFSKKSGNDLVSRIVFTILILIVCRFGSFIPIPGIDSIALSSVAEKNQSGILGMFNMLSGGSLGRMSIFALAIMPYITASIIIQLMSVAYKPLENLKKEGEVGKRKVNQLSRYLTVLLASFQAYGVAISLESIVTNTGPVVILAGFFFRVTTVITLVVGTMLLMWLGEQITQRGIGNGTSLIIFIGIISGVPSAIISMFELSRKGALSPLIALAVCIGVVVLIAIIIFFEKAQRKLLVQYPKRQVGNKIYGGEATHMPLKLNTSGVIPPIFASSILLFPATLANFSNSNSETMGMLTYYLGHGKPVYILLYVALIMFFSFFYTAIVFNSEETANNLRKYGAYIPGKRPGKNTSDYFDYILTRLTVIGGIYLSVICVIPELLMNKYVISLSLGGTSFLIVVNVVLDTMTQIQTYLFSSKYEGLMKKVKLKN.

A run of 10 helical transmembrane segments spans residues 17–37, 71–91, 117–137, 141–161, 184–204, 212–232, 268–288, 310–330, 366–386, and 388–408; these read IVFT…PIPG, IFAL…LMSV, LTVL…ESIV, GPVV…TLVV, LIIF…MFEL, PLIA…IIFF, GVIP…LANF, YILL…AIVF, LTVI…LLMN, and YVIS…VVLD.

The protein belongs to the SecY/SEC61-alpha family. As to quaternary structure, component of the Sec protein translocase complex. Heterotrimer consisting of SecY, SecE and SecG subunits. The heterotrimers can form oligomers, although 1 heterotrimer is thought to be able to translocate proteins. Interacts with the ribosome. Interacts with SecDF, and other proteins may be involved. Interacts with SecA.

The protein resides in the cell inner membrane. The central subunit of the protein translocation channel SecYEG. Consists of two halves formed by TMs 1-5 and 6-10. These two domains form a lateral gate at the front which open onto the bilayer between TMs 2 and 7, and are clamped together by SecE at the back. The channel is closed by both a pore ring composed of hydrophobic SecY resides and a short helix (helix 2A) on the extracellular side of the membrane which forms a plug. The plug probably moves laterally to allow the channel to open. The ring and the pore may move independently. The polypeptide is Protein translocase subunit SecY (Rickettsia felis (strain ATCC VR-1525 / URRWXCal2) (Rickettsia azadi)).